The primary structure comprises 428 residues: Histidinol dehydrogenase (428 aa).

NAD(+) is bound by residues Y129, Q188, and N211. The substrate site is built by S234, Q256, and H259. The Zn(2+) site is built by Q256 and H259. Residues E323 and H324 each act as proton acceptor in the active site. H324, D357, E411, and H416 together coordinate substrate. Residue D357 coordinates Zn(2+). H416 is a Zn(2+) binding site.

This sequence belongs to the histidinol dehydrogenase family. The cofactor is Zn(2+).

It catalyses the reaction L-histidinol + 2 NAD(+) + H2O = L-histidine + 2 NADH + 3 H(+). The protein operates within amino-acid biosynthesis; L-histidine biosynthesis; L-histidine from 5-phospho-alpha-D-ribose 1-diphosphate: step 9/9. Its function is as follows. Catalyzes the sequential NAD-dependent oxidations of L-histidinol to L-histidinaldehyde and then to L-histidine. This chain is Histidinol dehydrogenase, found in Caulobacter vibrioides (strain ATCC 19089 / CIP 103742 / CB 15) (Caulobacter crescentus).